The sequence spans 98 residues: HssA/B-like protein 34 (98 aa).

Disordered regions lie at residues 1–26 (MTLF…SFGS) and 60–98 (AKSS…SCSC). Gly residues predominate over residues 60-72 (AKSSGGSCGGKGG). Basic residues predominate over residues 73–88 (SHNHGHGHGHGPHGHG). The span at 89-98 (GKGSGGSCSC) shows a compositional bias: gly residues.

This sequence belongs to the hssA/B family.

The polypeptide is HssA/B-like protein 34 (hssl34) (Dictyostelium discoideum (Social amoeba)).